Here is a 373-residue protein sequence, read N- to C-terminus: Probable tRNA sulfurtransferase (373 aa).

One can recognise a THUMP domain in the interval 54–158; sequence NKNIEELSKV…NDVAYFYYKI (105 aa). Residues 176-177, 201-202, K256, G278, and Q287 contribute to the ATP site; these read LF and NF.

It belongs to the ThiI family.

The protein resides in the cytoplasm. The catalysed reaction is [ThiI sulfur-carrier protein]-S-sulfanyl-L-cysteine + a uridine in tRNA + 2 reduced [2Fe-2S]-[ferredoxin] + ATP + H(+) = [ThiI sulfur-carrier protein]-L-cysteine + a 4-thiouridine in tRNA + 2 oxidized [2Fe-2S]-[ferredoxin] + AMP + diphosphate. It carries out the reaction [ThiS sulfur-carrier protein]-C-terminal Gly-Gly-AMP + S-sulfanyl-L-cysteinyl-[cysteine desulfurase] + AH2 = [ThiS sulfur-carrier protein]-C-terminal-Gly-aminoethanethioate + L-cysteinyl-[cysteine desulfurase] + A + AMP + 2 H(+). It functions in the pathway cofactor biosynthesis; thiamine diphosphate biosynthesis. Its function is as follows. Catalyzes the ATP-dependent transfer of a sulfur to tRNA to produce 4-thiouridine in position 8 of tRNAs, which functions as a near-UV photosensor. Also catalyzes the transfer of sulfur to the sulfur carrier protein ThiS, forming ThiS-thiocarboxylate. This is a step in the synthesis of thiazole, in the thiamine biosynthesis pathway. The sulfur is donated as persulfide by IscS. This Saccharolobus islandicus (strain L.S.2.15 / Lassen #1) (Sulfolobus islandicus) protein is Probable tRNA sulfurtransferase.